A 62-amino-acid chain; its full sequence is Large ribosomal subunit protein bL33 (62 aa).

It belongs to the bacterial ribosomal protein bL33 family.

The chain is Large ribosomal subunit protein bL33 from Bacteroides thetaiotaomicron (strain ATCC 29148 / DSM 2079 / JCM 5827 / CCUG 10774 / NCTC 10582 / VPI-5482 / E50).